Reading from the N-terminus, the 159-residue chain is uncharacterized protein (159 aa).

2 disordered regions span residues 1 to 23 (MEQD…KGQA) and 91 to 110 (AGGG…GPAA).

This is an uncharacterized protein from Homo sapiens (Human).